Consider the following 346-residue polypeptide: Phenylalanine--tRNA ligase alpha subunit (346 aa).

Glu-260 lines the Mg(2+) pocket.

It belongs to the class-II aminoacyl-tRNA synthetase family. Phe-tRNA synthetase alpha subunit type 1 subfamily. In terms of assembly, tetramer of two alpha and two beta subunits. Mg(2+) is required as a cofactor.

It localises to the cytoplasm. The catalysed reaction is tRNA(Phe) + L-phenylalanine + ATP = L-phenylalanyl-tRNA(Phe) + AMP + diphosphate + H(+). This is Phenylalanine--tRNA ligase alpha subunit from Herpetosiphon aurantiacus (strain ATCC 23779 / DSM 785 / 114-95).